The chain runs to 120 residues: uncharacterized protein (120 aa).

The N-terminal stretch at 1–27 is a signal peptide; it reads MPKIGVSLIVLIMLIIFLAGCNKNEQN.

This is an uncharacterized protein from Bacillus subtilis (strain 168).